Reading from the N-terminus, the 4485-residue chain is Dynein gamma chain, flagellar outer arm (4485 aa).

The interval 1 to 1780 (MALDNRHRLI…IISICDVDFE (1780 aa)) is stem. Coiled coils occupy residues 449–469 (IEGLDTMLKSLNNIIDDVKRK), 804–838 (VEQNRFQKKQAELLAIRNEEVRRAIEDLYTLVRNY), 1093–1114 (VRNVMAVLKEVREKESEIDNLI), 1275–1297 (DVVEKIDEMGEQVQQYQNQSKKL), and 1699–1727 (KKVDALLRDMVNITVRLDLTKNQRTNLET). AAA stretches follow at residues 1781–2002 (YSFE…VLRT), 2061–2279 (KDAE…ISLK), 2384–2638 (TYPK…VFQG), and 2763–3013 (KFNE…YRRY). ATP contacts are provided by residues 1819–1826 (GPAGTGKT), 2099–2106 (GPSGSGKS), 2425–2432 (GGPGTAKT), and 2802–2809 (GVGGSGKQ). Coiled-coil stretches lie at residues 3077-3099 (AKEAEALLKQISESTAIAEKEKQ), 3196-3227 (EAQKMMNQMSFLQDLKDFAKEQINDETVELLE), 3265-3343 (KVVE…LAGE), and 3569-3663 (EDQL…EEYR). The interval 3077-3343 (AKEAEALLKQ…NALIGALAGE (267 aa)) is stalk. AAA regions lie at residues 3412–3643 (LVDD…DVSE) and 3857–4071 (AADY…FLQN).

The protein belongs to the dynein heavy chain family. As to quaternary structure, consists of at least 3 heavy chains (alpha, beta and gamma), 2 intermediate chains and 8 light chains.

The protein resides in the cell projection. It localises to the cilium. Its subcellular location is the flagellum. The protein localises to the cytoplasm. It is found in the cytoskeleton. The protein resides in the flagellum axoneme. Functionally, force generating protein of eukaryotic cilia and flagella. Produces force towards the minus ends of microtubules. Dynein has ATPase activity; the force-producing power stroke is thought to occur on release of ADP. The chain is Dynein gamma chain, flagellar outer arm (ODA2) from Chlamydomonas reinhardtii (Chlamydomonas smithii).